We begin with the raw amino-acid sequence, 98 residues long: Large ribosomal subunit protein uL23 (98 aa).

This sequence belongs to the universal ribosomal protein uL23 family. Part of the 50S ribosomal subunit. Contacts protein L29, and trigger factor when it is bound to the ribosome.

Functionally, one of the early assembly proteins it binds 23S rRNA. One of the proteins that surrounds the polypeptide exit tunnel on the outside of the ribosome. Forms the main docking site for trigger factor binding to the ribosome. This Bifidobacterium longum (strain DJO10A) protein is Large ribosomal subunit protein uL23.